The following is a 378-amino-acid chain: Putative zinc finger protein 302L (378 aa).

The C2H2-type; degenerate zinc-finger motif lies at 3–25; sequence IVCEFCDKSFDSKSKVNAHQRTK.

It belongs to the IIV-6 302L family.

This Invertebrate iridescent virus 6 (IIV-6) protein is Putative zinc finger protein 302L.